The sequence spans 312 residues: Malate dehydrogenase (312 aa).

Residues 7 to 13 (GAAGGIG) and aspartate 34 each bind NAD(+). Substrate contacts are provided by arginine 81 and arginine 87. Residues asparagine 94 and 117–119 (ITN) contribute to the NAD(+) site. Substrate contacts are provided by asparagine 119 and arginine 153. The Proton acceptor role is filled by histidine 177. Methionine 227 is a binding site for NAD(+).

The protein belongs to the LDH/MDH superfamily. MDH type 1 family. In terms of assembly, homodimer.

It carries out the reaction (S)-malate + NAD(+) = oxaloacetate + NADH + H(+). Its function is as follows. Catalyzes the reversible oxidation of malate to oxaloacetate. This chain is Malate dehydrogenase, found in Salmonella dublin (strain CT_02021853).